The chain runs to 403 residues: Imidazolonepropionase (403 aa).

Residues H69 and H71 each contribute to the Fe(3+) site. Positions 69 and 71 each coordinate Zn(2+). 4-imidazolone-5-propanoate-binding residues include R78, Y141, and H174. Y141 serves as a coordination point for N-formimidoyl-L-glutamate. H239 is a binding site for Fe(3+). Zn(2+) is bound at residue H239. Q242 is a binding site for 4-imidazolone-5-propanoate. A Fe(3+)-binding site is contributed by D314. D314 is a Zn(2+) binding site. N316 and G318 together coordinate N-formimidoyl-L-glutamate. S319 serves as a coordination point for 4-imidazolone-5-propanoate.

Belongs to the metallo-dependent hydrolases superfamily. HutI family. Zn(2+) serves as cofactor. The cofactor is Fe(3+).

The protein localises to the cytoplasm. It carries out the reaction 4-imidazolone-5-propanoate + H2O = N-formimidoyl-L-glutamate. It participates in amino-acid degradation; L-histidine degradation into L-glutamate; N-formimidoyl-L-glutamate from L-histidine: step 3/3. Functionally, catalyzes the hydrolytic cleavage of the carbon-nitrogen bond in imidazolone-5-propanoate to yield N-formimidoyl-L-glutamate. It is the third step in the universal histidine degradation pathway. The sequence is that of Imidazolonepropionase from Legionella pneumophila (strain Paris).